The following is a 632-amino-acid chain: Chaperone protein HtpG (632 aa).

The interval Met1 to Arg339 is a; substrate-binding. A b region spans residues Glu340–Arg559. Residues Met560–Ala632 are c.

This sequence belongs to the heat shock protein 90 family. In terms of assembly, homodimer.

It localises to the cytoplasm. Functionally, molecular chaperone. Has ATPase activity. The chain is Chaperone protein HtpG from Burkholderia cenocepacia (strain HI2424).